We begin with the raw amino-acid sequence, 540 residues long: Raucaffricine-O-beta-D-glucosidase (540 aa).

A beta-D-glucoside is bound by residues Gln36, His140, and Asn185–Glu186. Catalysis depends on Glu186, which acts as the Proton donor. Cys221 and Cys230 form a disulfide bridge. A beta-D-glucoside-binding positions include Tyr347, Glu420, Trp469, Glu476 to Trp477, and Phe485. Glu420 serves as the catalytic Nucleophile.

This sequence belongs to the glycosyl hydrolase 1 family.

It carries out the reaction raucaffricine + H2O = vomilenine + D-glucose. It catalyses the reaction vomilenine + UDP-alpha-D-glucose = raucaffricine + UDP + H(+). Glucosidase specifically involved in alkaloid biosynthesis leading to the accumulation of several alkaloids, including ajmaline, an important plant-derived pharmaceutical used in the treatment of heart disorders. The chain is Raucaffricine-O-beta-D-glucosidase from Rauvolfia serpentina (Serpentine wood).